We begin with the raw amino-acid sequence, 136 residues long: Small ribosomal subunit protein uS8c (136 aa).

Belongs to the universal ribosomal protein uS8 family. As to quaternary structure, part of the 30S ribosomal subunit.

It localises to the plastid. It is found in the chloroplast. One of the primary rRNA binding proteins, it binds directly to 16S rRNA central domain where it helps coordinate assembly of the platform of the 30S subunit. This chain is Small ribosomal subunit protein uS8c (rps8), found in Hordeum vulgare (Barley).